Here is a 580-residue protein sequence, read N- to C-terminus: Tricyclene synthase TPS4, chloroplastic (580 aa).

The transit peptide at 1 to 41 (MLLNSSFISLPSFFKSQELGRTNLLIHRNGSPLLCYATNTN) directs the protein to the chloroplast. (2E)-geranyl diphosphate-binding residues include Arg296, Asp334, Asp338, Arg475, and Asn478. The Mg(2+) site is built by Asp334 and Asp338. Positions 334–338 (DDIYD) match the DDXXD motif motif. Residues Asn478, Thr482, and Glu486 each coordinate Mg(2+).

The protein belongs to the terpene synthase family. Tpsb subfamily. Mg(2+) serves as cofactor. Mn(2+) is required as a cofactor. As to expression, expressed in leaves.

The protein resides in the plastid. The protein localises to the chloroplast stroma. It carries out the reaction (2E)-geranyl diphosphate = tricyclene + diphosphate. It catalyses the reaction (2E)-geranyl diphosphate = (E)-beta-ocimene + diphosphate. Its pathway is secondary metabolite biosynthesis; terpenoid biosynthesis. Functionally, promotes the emission of terpenes volatile organic compounds (VOC) in response to damage mediated by arthropod herbivores (e.g. Spodoptera exigua), probably to attract natural enemies of the herbivores. This is Tricyclene synthase TPS4, chloroplastic (TPS4) from Medicago truncatula (Barrel medic).